Here is a 610-residue protein sequence, read N- to C-terminus: Glutamine--fructose-6-phosphate aminotransferase [isomerizing] (610 aa).

The active-site Nucleophile; for GATase activity is the Cys-2. The 220-residue stretch at 2–221 (CGIVGAVAQR…DGDVVDLQLA (220 aa)) folds into the Glutamine amidotransferase type-2 domain. 2 SIS domains span residues 286 to 426 (AYKV…TRGR) and 459 to 600 (WADR…VDKP). Lys-605 (for Fru-6P isomerization activity) is an active-site residue.

As to quaternary structure, homodimer.

The protein localises to the cytoplasm. The catalysed reaction is D-fructose 6-phosphate + L-glutamine = D-glucosamine 6-phosphate + L-glutamate. In terms of biological role, catalyzes the first step in hexosamine metabolism, converting fructose-6P into glucosamine-6P using glutamine as a nitrogen source. The chain is Glutamine--fructose-6-phosphate aminotransferase [isomerizing] from Bordetella pertussis (strain Tohama I / ATCC BAA-589 / NCTC 13251).